The chain runs to 188 residues: Elongation factor P 1 (188 aa).

It belongs to the elongation factor P family.

Its subcellular location is the cytoplasm. The protein operates within protein biosynthesis; polypeptide chain elongation. Involved in peptide bond synthesis. Stimulates efficient translation and peptide-bond synthesis on native or reconstituted 70S ribosomes in vitro. Probably functions indirectly by altering the affinity of the ribosome for aminoacyl-tRNA, thus increasing their reactivity as acceptors for peptidyl transferase. The chain is Elongation factor P 1 from Mesorhizobium japonicum (strain LMG 29417 / CECT 9101 / MAFF 303099) (Mesorhizobium loti (strain MAFF 303099)).